The following is a 179-amino-acid chain: ADP-ribosylation factor-like protein 5A (179 aa).

Gly-2 carries N-myristoyl glycine lipidation. GTP contacts are provided by residues 23–30 (GLDNAGKT), 66–70 (DIGGQ), 125–128 (NKQD), and Ala-159.

This sequence belongs to the small GTPase superfamily. Arf family. In terms of tissue distribution, low amounts were found in most tissues examined with highest levels in brain, intestine and thymus.

Its function is as follows. Lacks ADP-ribosylation enhancing activity. In Rattus norvegicus (Rat), this protein is ADP-ribosylation factor-like protein 5A (Arl5a).